A 581-amino-acid polypeptide reads, in one-letter code: uncharacterized protein (581 aa).

The protein belongs to the UbiD family.

This is an uncharacterized protein from Chlamydia caviae (strain ATCC VR-813 / DSM 19441 / 03DC25 / GPIC) (Chlamydophila caviae).